The primary structure comprises 212 residues: Ropporin-1 (212 aa).

In terms of domain architecture, RIIa spans 12-43; it reads PELPELLKQFTKDAIRTQPPDLIQWAAEYFGA. Ser-56 bears the Phosphoserine mark. Residues 209–212 are interaction with RHPN1; that stretch reads VRLE.

The protein belongs to the ropporin family. In terms of assembly, homodimer. Interacts with AKAP3. May interact with SPA17. Interacts with RHPN1. Interacts with FSCB; the interaction increases upon spermatozoa capacitation conditions. Interacts with CFAP61. Post-translationally, sumoylated, sumoylation decreases upon spermatozoa capacitation conditions. As to expression, testis-specific. Present in the most inner parts of seminiferous tubules (at protein level).

The protein localises to the cell projection. Its subcellular location is the cilium. The protein resides in the flagellum. Its function is as follows. Important for male fertility. With ROPN1L, involved in fibrous sheath integrity and sperm motility, plays a role in PKA-dependent signaling processes required for spermatozoa capacitation. The protein is Ropporin-1 (Ropn1) of Mus musculus (Mouse).